We begin with the raw amino-acid sequence, 464 residues long: Soluble pyridine nucleotide transhydrogenase (464 aa).

Residue 35–44 participates in FAD binding; the sequence is DSRREVGGNC.

This sequence belongs to the class-I pyridine nucleotide-disulfide oxidoreductase family. The cofactor is FAD.

It localises to the cytoplasm. It catalyses the reaction NAD(+) + NADPH = NADH + NADP(+). In terms of biological role, conversion of NADPH, generated by peripheral catabolic pathways, to NADH, which can enter the respiratory chain for energy generation. This chain is Soluble pyridine nucleotide transhydrogenase, found in Pseudomonas syringae pv. tomato (strain ATCC BAA-871 / DC3000).